The chain runs to 330 residues: Ketol-acid reductoisomerase (NADP(+)) (330 aa).

One can recognise a KARI N-terminal Rossmann domain in the interval 2–182 (VKIFYDKDVT…GLTKVGVIQT (181 aa)). NADP(+) contacts are provided by residues 25–28 (YGSQ), R48, S53, and 83–86 (DEVQ). H108 is an active-site residue. G134 lines the NADP(+) pocket. A KARI C-terminal knotted domain is found at 183–328 (TFREETETDL…KELRKMCGLE (146 aa)). The Mg(2+) site is built by D191, E195, E227, and E231. S252 is a binding site for substrate.

It belongs to the ketol-acid reductoisomerase family. Mg(2+) serves as cofactor.

The catalysed reaction is (2R)-2,3-dihydroxy-3-methylbutanoate + NADP(+) = (2S)-2-acetolactate + NADPH + H(+). It catalyses the reaction (2R,3R)-2,3-dihydroxy-3-methylpentanoate + NADP(+) = (S)-2-ethyl-2-hydroxy-3-oxobutanoate + NADPH + H(+). It functions in the pathway amino-acid biosynthesis; L-isoleucine biosynthesis; L-isoleucine from 2-oxobutanoate: step 2/4. The protein operates within amino-acid biosynthesis; L-valine biosynthesis; L-valine from pyruvate: step 2/4. Involved in the biosynthesis of branched-chain amino acids (BCAA). Catalyzes an alkyl-migration followed by a ketol-acid reduction of (S)-2-acetolactate (S2AL) to yield (R)-2,3-dihydroxy-isovalerate. In the isomerase reaction, S2AL is rearranged via a Mg-dependent methyl migration to produce 3-hydroxy-3-methyl-2-ketobutyrate (HMKB). In the reductase reaction, this 2-ketoacid undergoes a metal-dependent reduction by NADPH to yield (R)-2,3-dihydroxy-isovalerate. The polypeptide is Ketol-acid reductoisomerase (NADP(+)) (Methanocaldococcus jannaschii (strain ATCC 43067 / DSM 2661 / JAL-1 / JCM 10045 / NBRC 100440) (Methanococcus jannaschii)).